Here is a 382-residue protein sequence, read N- to C-terminus: Alanine racemase 1 (382 aa).

The active-site Proton acceptor; specific for D-alanine is the K39. K39 carries the post-translational modification N6-(pyridoxal phosphate)lysine. R138 is a substrate binding site. Y265 serves as the catalytic Proton acceptor; specific for L-alanine. Residue M312 coordinates substrate.

It belongs to the alanine racemase family. Pyridoxal 5'-phosphate serves as cofactor.

It catalyses the reaction L-alanine = D-alanine. It functions in the pathway amino-acid biosynthesis; D-alanine biosynthesis; D-alanine from L-alanine: step 1/1. Its function is as follows. Catalyzes the interconversion of L-alanine and D-alanine. May also act on other amino acids. This Staphylococcus aureus (strain N315) protein is Alanine racemase 1 (alr1).